The chain runs to 249 residues: Isoprenyl transferase (249 aa).

Asp-29 is a catalytic residue. Asp-29 provides a ligand contact to Mg(2+). Residues 30–33 (GNGR), Trp-34, Arg-42, His-46, and 74–76 (STE) each bind substrate. The active-site Proton acceptor is the Asn-77. Substrate is bound by residues Trp-78, Arg-80, Arg-197, and 203–205 (RLS). Glu-216 contributes to the Mg(2+) binding site.

It belongs to the UPP synthase family. As to quaternary structure, homodimer. Mg(2+) is required as a cofactor.

Its function is as follows. Catalyzes the condensation of isopentenyl diphosphate (IPP) with allylic pyrophosphates generating different type of terpenoids. The protein is Isoprenyl transferase of Trichormus variabilis (strain ATCC 29413 / PCC 7937) (Anabaena variabilis).